Reading from the N-terminus, the 342-residue chain is Cathepsin B-like cysteine proteinase 1 (342 aa).

The signal sequence occupies residues 1 to 18 (MKYLVLALCTYLCSQTGA). The propeptide at 19-86 (DENAAQGIPL…VKEDPDPEVD (68 aa)) is activation peptide. N-linked (GlcNAc...) asparagine glycosylation is present at Asn-99. Cystine bridges form between Cys-100-Cys-128, Cys-111-Cys-156, Cys-147-Cys-214, Cys-148-Cys-152, Cys-185-Cys-218, and Cys-193-Cys-205. The active site involves Cys-114. N-linked (GlcNAc...) asparagine glycosylation occurs at Asn-138. Residue Asn-198 is glycosylated (N-linked (GlcNAc...) asparagine). His-285 is a catalytic residue. N-linked (GlcNAc...) asparagine glycosylation is present at Asn-296. Asn-305 is an active-site residue.

It belongs to the peptidase C1 family.

Expression of the protease correlates with blood-feeding and suggests a role for the protease in blood digestion. In Haemonchus contortus (Barber pole worm), this protein is Cathepsin B-like cysteine proteinase 1 (AC-1).